Consider the following 625-residue polypeptide: tRNA uridine 5-carboxymethylaminomethyl modification enzyme MnmG (625 aa).

An FAD-binding site is contributed by 13–18 (GGGHAG). 273–287 (GPRYCPSIEDKVVRF) is a binding site for NAD(+).

This sequence belongs to the MnmG family. As to quaternary structure, homodimer. Heterotetramer of two MnmE and two MnmG subunits. FAD serves as cofactor.

It is found in the cytoplasm. Functionally, NAD-binding protein involved in the addition of a carboxymethylaminomethyl (cmnm) group at the wobble position (U34) of certain tRNAs, forming tRNA-cmnm(5)s(2)U34. The polypeptide is tRNA uridine 5-carboxymethylaminomethyl modification enzyme MnmG (Methylococcus capsulatus (strain ATCC 33009 / NCIMB 11132 / Bath)).